A 350-amino-acid polypeptide reads, in one-letter code: Mitochondrial glycine transporter (350 aa).

3 Solcar repeats span residues 23–107 (SKPK…LRQC), 134–218 (LSHT…SKKN), and 250–334 (SSIS…LILK). A run of 6 helical transmembrane segments spans residues 29-54 (FIAGLASGLSSAILLQPADLLKTRIQ), 82-108 (GTLPSALRTGFGSALYFSSLNALRQCI), 140-165 (LLTGAMARTAAGFIMMPVTVIKVRYE), 193-216 (GFGATAIRDAPYAGLYVVFYEQSK), 254-280 (VNFVSGALAAGLATSITNPFDVVKTRL), and 309-327 (GLGLRMGRKAISSALAWTV).

It belongs to the mitochondrial carrier (TC 2.A.29) family. SLC25A38 subfamily.

The protein resides in the mitochondrion inner membrane. The enzyme catalyses glycine(in) = glycine(out). Functionally, mitochondrial glycine transporter that imports glycine into the mitochondrial matrix. Plays an important role in providing glycine for the first enzymatic step in heme biosynthesis, the condensation of glycine with succinyl-CoA to produce 5-aminolevulinate (ALA) in the mitochondrial matrix. This Ajellomyces capsulatus (strain NAm1 / WU24) (Darling's disease fungus) protein is Mitochondrial glycine transporter.